Consider the following 229-residue polypeptide: Cytidylate kinase (229 aa).

Residue 10–18 (GHSSSGKST) participates in ATP binding.

Belongs to the cytidylate kinase family. Type 1 subfamily.

It is found in the cytoplasm. The enzyme catalyses CMP + ATP = CDP + ADP. It catalyses the reaction dCMP + ATP = dCDP + ADP. The polypeptide is Cytidylate kinase (Parabacteroides distasonis (strain ATCC 8503 / DSM 20701 / CIP 104284 / JCM 5825 / NCTC 11152)).